The primary structure comprises 397 residues: F-box protein At3g49450 (397 aa).

An F-box domain is found at 26 to 75; that stretch reads GENSGTLPTDLMVEILSRVPAKSAARFRCVSNDWNSLLRSPYLTNLFLKR.

This chain is F-box protein At3g49450, found in Arabidopsis thaliana (Mouse-ear cress).